A 230-amino-acid polypeptide reads, in one-letter code: Thymidylate kinase (230 aa).

Position 20 to 27 (20 to 27 (GGEGSGKS)) interacts with ATP.

The protein belongs to the thymidylate kinase family.

The catalysed reaction is dTMP + ATP = dTDP + ADP. Phosphorylation of dTMP to form dTDP in both de novo and salvage pathways of dTTP synthesis. In Nitrobacter winogradskyi (strain ATCC 25391 / DSM 10237 / CIP 104748 / NCIMB 11846 / Nb-255), this protein is Thymidylate kinase.